Reading from the N-terminus, the 387-residue chain is MTKSIKRPPPFSCKQVLLTYVILAYTVAAHSSPPPCGLYGAPPCQFLPAPPGQTPTCARPGKTYCEHADNYPTYLIKSLVRKWGYEAATLLVDETWEDFAAVAWHDTPVFYDPKSIFPPRDPAAQDFNGYSYQTPFGGNPQRPSGGGNPLFVSNPSTEAPTYLLYTSSGGGHRSGHRYNSQGGGTSSSGGHLYINQSDKSTPYNATLWLKRLVRDLSRKQRQPDEVQAEVVEPVNEQTEEAEEQDNPAEDHPQSKRDVSLNMDLLDIVGVEAPNPLKKRSRTKRQSPGRSTLCQTTSQFITPQAALNSRGNWMFVVNEQNTARQMVKAELCASNTCSNLCELPNGYNSRCEQKFVQKRLIALQGNGQNLYTDTFWFPSCCVCTIAAN.

The first 29 residues, 1 to 29 (MTKSIKRPPPFSCKQVLLTYVILAYTVAA), serve as a signal peptide directing secretion. Positions 30–284 (HSSPPPCGLY…PLKKRSRTKR (255 aa)) are excised as a propeptide. The disordered stretch occupies residues 133 to 197 (QTPFGGNPQR…SGGHLYINQS (65 aa)). N-linked (GlcNAc...) asparagine glycans are attached at residues Asn-195 and Asn-204. Disordered stretches follow at residues 219-256 (KQRQ…QSKR) and 269-291 (GVEA…GRST). Residues 237-247 (QTEEAEEQDNP) show a composition bias toward acidic residues. The segment covering 276 to 286 (LKKRSRTKRQS) has biased composition (basic residues). One can recognise a Spaetzle domain in the interval 291–384 (TLCQTTSQFI…WFPSCCVCTI (94 aa)). 3 cysteine pairs are disulfide-bonded: Cys-293-Cys-350, Cys-331-Cys-380, and Cys-340-Cys-382.

Homodimer; disulfide-linked. As to expression, detected in the fan-shaped body which is a component of the locomotion center in the central nervous system (CNS) (at protein level).

Neurotrophin which may function as a ligand for the Toll-related receptors Toll-6 and Toll-7. Binds to Toll-7 and Toll-6, and probably acts as their ligands in the promotion of motor axon targeting and neuronal survival in the central nervous system (CNS). Involved in synaptic targeting of ISNb/d motorneurons and also some SNa motorneurons. May be involved in the normal development of specific neurons at the neuromuscular junction. The protein is Protein spaetzle 5 of Drosophila melanogaster (Fruit fly).